Consider the following 440-residue polypeptide: Enolase (440 aa).

The tract at residues 120-189 (KAAAAEKRVP…TEAMRQGAEV (70 aa)) is igE-binding determinant. Residues His-159 and Glu-168 each coordinate substrate. Catalysis depends on Glu-211, which acts as the Proton donor. Positions 246, 297, and 324 each coordinate Mg(2+). Glu-297 and Asp-324 together coordinate substrate. The active-site Proton acceptor is Lys-349. Substrate contacts are provided by residues 376–379 (SHRS) and Lys-400.

It belongs to the enolase family. Homodimer. Mg(2+) is required as a cofactor.

The protein localises to the cytoplasm. It carries out the reaction (2R)-2-phosphoglycerate = phosphoenolpyruvate + H2O. Its pathway is carbohydrate degradation; glycolysis; pyruvate from D-glyceraldehyde 3-phosphate: step 4/5. The chain is Enolase (ENO) from Davidiella tassiana (Mycosphaerella tassiana).